The following is a 316-amino-acid chain: MNIVFMGSPDFAVPGLEKLYNEPGITIKAVVTQPDRKKGRGHKLRPTPVKQMAHKLGLKVLQTDNINREEFITNLRDLSPEAIVVVAFGQKLGKKVLELPSYGCINLHASLLPRYRGASPIHRAIINGDKVTGVTTMYMDEGWDTGDIIYKKEVKINREDTAGTLHDKLASIGGDLLVKTLNDIEKGVAPREKQSEDKASYAYKIDRKIGELDWSRSSEDIFNLVRGVNPWPGAYTTWKGKLLKIWWVEPLKLTVTENDKKMEAGEVITASQEDGIIVKTGDDAVKIIELQLAGRKKITADKFVLGYNIKEGDKLG.

110–113 (SLLP) contributes to the (6S)-5,6,7,8-tetrahydrofolate binding site.

This sequence belongs to the Fmt family.

The catalysed reaction is L-methionyl-tRNA(fMet) + (6R)-10-formyltetrahydrofolate = N-formyl-L-methionyl-tRNA(fMet) + (6S)-5,6,7,8-tetrahydrofolate + H(+). Functionally, attaches a formyl group to the free amino group of methionyl-tRNA(fMet). The formyl group appears to play a dual role in the initiator identity of N-formylmethionyl-tRNA by promoting its recognition by IF2 and preventing the misappropriation of this tRNA by the elongation apparatus. The protein is Methionyl-tRNA formyltransferase of Halothermothrix orenii (strain H 168 / OCM 544 / DSM 9562).